Reading from the N-terminus, the 318-residue chain is D-alanine--D-alanine ligase (318 aa).

The ATP-grasp domain occupies 117–315 (KQVWLSLGLS…FETLVWRVLE (199 aa)). Residue 146 to 201 (ARQIGLPIIVKPANEGSSVGVSRVFDQAQLEEAVTLAARYDGALLMEQLIEGDELT) coordinates ATP. Positions 268, 282, and 284 each coordinate Mg(2+).

Belongs to the D-alanine--D-alanine ligase family. Requires Mg(2+) as cofactor. Mn(2+) serves as cofactor.

It localises to the cytoplasm. The enzyme catalyses 2 D-alanine + ATP = D-alanyl-D-alanine + ADP + phosphate + H(+). Its pathway is cell wall biogenesis; peptidoglycan biosynthesis. In terms of biological role, cell wall formation. The sequence is that of D-alanine--D-alanine ligase from Xanthomonas axonopodis pv. citri (strain 306).